A 390-amino-acid chain; its full sequence is Type II methyltransferase M.SacI (390 aa).

Positions 5–371 (LPVISLFSGA…RALMEQLGYL (367 aa)) constitute an SAM-dependent MTase C5-type domain. Residue Cys96 is part of the active site.

It belongs to the class I-like SAM-binding methyltransferase superfamily. C5-methyltransferase family.

The enzyme catalyses a 2'-deoxycytidine in DNA + S-adenosyl-L-methionine = a 5-methyl-2'-deoxycytidine in DNA + S-adenosyl-L-homocysteine + H(+). Its function is as follows. A beta methylase recognizes the double-stranded sequence 5'-GAGCTC-3', methylates C-4 on both strands, and protects the DNA from cleavage by the SacI endonuclease. This Streptomyces achromogenes protein is Type II methyltransferase M.SacI.